The following is a 465-amino-acid chain: Glutamate--tRNA ligase (465 aa).

The 'HIGH' region motif lies at 5-15 (PSPTGMFHVGG). 4 residues coordinate Zn(2+): cysteine 96, cysteine 98, cysteine 118, and aspartate 120. Residues 228–232 (KLSKR) carry the 'KMSKS' region motif. Lysine 231 provides a ligand contact to ATP.

The protein belongs to the class-I aminoacyl-tRNA synthetase family. Glutamate--tRNA ligase type 1 subfamily. In terms of assembly, monomer. Zn(2+) is required as a cofactor.

Its subcellular location is the cytoplasm. It carries out the reaction tRNA(Glu) + L-glutamate + ATP = L-glutamyl-tRNA(Glu) + AMP + diphosphate. Functionally, catalyzes the attachment of glutamate to tRNA(Glu) in a two-step reaction: glutamate is first activated by ATP to form Glu-AMP and then transferred to the acceptor end of tRNA(Glu). The polypeptide is Glutamate--tRNA ligase (Salinispora tropica (strain ATCC BAA-916 / DSM 44818 / JCM 13857 / NBRC 105044 / CNB-440)).